The primary structure comprises 250 residues: Phosphonates import ATP-binding protein PhnC (250 aa).

The 246-residue stretch at 2 to 247 folds into the ABC transporter domain; sequence ILFNNVNKVW…KLDAQAMKKI (246 aa). 35–42 contacts ATP; it reads GLSGAGKT.

It belongs to the ABC transporter superfamily. Phosphonates importer (TC 3.A.1.9.1) family. In terms of assembly, the complex is composed of two ATP-binding proteins (PhnC), two transmembrane proteins (PhnE) and a solute-binding protein (PhnD).

It is found in the cell membrane. It carries out the reaction phosphonate(out) + ATP + H2O = phosphonate(in) + ADP + phosphate + H(+). In terms of biological role, part of the ABC transporter complex PhnCDE involved in phosphonates import. Responsible for energy coupling to the transport system. The chain is Phosphonates import ATP-binding protein PhnC from Mycoplasma capricolum subsp. capricolum (strain California kid / ATCC 27343 / NCTC 10154).